The primary structure comprises 455 residues: MNKYFFIGIGGISMSAIALILKNQGFWVEGSDMQESATTKMLRENGINVYIGHDESHIHGDETVIYTAAISKDNPELLAAKRMNLKIYERAEFLGLLMKDFKNVITISGTHGKTTTTSMIGYILKKANYNPTVLVGAFVKQLGGNFVIGSKEYLVVEACEYVDSFLKFNPTIGVILNIDNDHLDYFKDIDSIKNSFKKFAQKIPTSGFLVVNYDDKNVKDIINQLNTQIICISTKEKTDIFADNISCSDGYYEFDVKNNNDEILAHIKLNIPGFHNVYNALAAFAVASKLGVESITIEQALSEFRGASRRLEKVGEFNGIYLYDDYAHHPTEIKATLATLKKISEGKVLAIFQPHTFSRLKTLLNEFAESLQLADKVIVTDVYAAREKNVFGITSEKLYLKLKEIGIDCEYISNFEDIACYAVKEAKKGDIIATIGAGDINKCLDIILKKAVVKS.

109-115 (GTHGKTT) contributes to the ATP binding site.

This sequence belongs to the MurCDEF family.

The protein resides in the cytoplasm. The enzyme catalyses UDP-N-acetyl-alpha-D-muramate + L-alanine + ATP = UDP-N-acetyl-alpha-D-muramoyl-L-alanine + ADP + phosphate + H(+). Its pathway is cell wall biogenesis; peptidoglycan biosynthesis. In terms of biological role, cell wall formation. This Caldicellulosiruptor bescii (strain ATCC BAA-1888 / DSM 6725 / KCTC 15123 / Z-1320) (Anaerocellum thermophilum) protein is UDP-N-acetylmuramate--L-alanine ligase.